The sequence spans 943 residues: Isoleucine--tRNA ligase (943 aa).

The 'HIGH' region motif lies at 59-69 (PYANGRIHLGH). E577 contributes to the L-isoleucyl-5'-AMP binding site. A 'KMSKS' region motif is present at residues 618-622 (KMSKS). K621 contacts ATP. Residues C906, C909, C926, and C929 each coordinate Zn(2+).

The protein belongs to the class-I aminoacyl-tRNA synthetase family. IleS type 1 subfamily. Monomer. The cofactor is Zn(2+).

The protein resides in the cytoplasm. It catalyses the reaction tRNA(Ile) + L-isoleucine + ATP = L-isoleucyl-tRNA(Ile) + AMP + diphosphate. In terms of biological role, catalyzes the attachment of isoleucine to tRNA(Ile). As IleRS can inadvertently accommodate and process structurally similar amino acids such as valine, to avoid such errors it has two additional distinct tRNA(Ile)-dependent editing activities. One activity is designated as 'pretransfer' editing and involves the hydrolysis of activated Val-AMP. The other activity is designated 'posttransfer' editing and involves deacylation of mischarged Val-tRNA(Ile). The chain is Isoleucine--tRNA ligase from Stenotrophomonas maltophilia (strain R551-3).